Consider the following 688-residue polypeptide: Glycine--tRNA ligase beta subunit (688 aa).

It belongs to the class-II aminoacyl-tRNA synthetase family. In terms of assembly, tetramer of two alpha and two beta subunits.

The protein resides in the cytoplasm. It catalyses the reaction tRNA(Gly) + glycine + ATP = glycyl-tRNA(Gly) + AMP + diphosphate. The sequence is that of Glycine--tRNA ligase beta subunit from Colwellia psychrerythraea (strain 34H / ATCC BAA-681) (Vibrio psychroerythus).